The chain runs to 58 residues: MATIKVTQVKSAIGRLPKHRATITGLGLRRINHTVELEDTPAVRGMVNKVHYMVKVEG.

The protein belongs to the universal ribosomal protein uL30 family. Part of the 50S ribosomal subunit.

This chain is Large ribosomal subunit protein uL30, found in Psychromonas ingrahamii (strain DSM 17664 / CCUG 51855 / 37).